The following is a 357-amino-acid chain: Vomeronasal type-1 receptor 5 (357 aa).

Over 1–3 the chain is Extracellular; it reads MLK. A helical transmembrane segment spans residues 4-24; sequence LVIIENMAEIMLFSLDLLLFS. Topologically, residues 25–52 are cytoplasmic; that stretch reads TDILCFNFPSKMIKLPGFITIQIFFYPQ. Residues 53-73 form a helical membrane-spanning segment; sequence ASFGISANTILLLFHIFTFVF. Over 74–81 the chain is Extracellular; the sequence is SHRSKSID. The chain crosses the membrane as a helical span at residues 82-102; it reads MIISHLSLIHILLLFTQAILV. Over 103 to 130 the chain is Cytoplasmic; the sequence is SLDFFGSQNTQDDLRYKVIVFLNKVMRG. Residues 131–151 form a helical membrane-spanning segment; sequence LSICTPCLLSVLQAIISPSIF. The Extracellular portion of the chain corresponds to 152-163; that stretch reads SLAKLKHPSASH. A helical transmembrane segment spans residues 164–184; it reads ILGFFLFSWVLNMFIGVIFCC. Residues 185–269 lie on the Cytoplasmic side of the membrane; the sequence is TLRLPPVKRG…RVSPVKRASQ (85 aa). The helical transmembrane segment at 270-290 threads the bilayer; sequence AILLLVSFVFTYWVDFTFSFS. At 291 to 300 the chain is on the extracellular side; the sequence is GGVTWINDSL. N-linked (GlcNAc...) asparagine glycosylation occurs at Asn297. The helical transmembrane segment at 301-321 threads the bilayer; that stretch reads LVWLQVIVANSYAAISPLMLI. Residues 322-357 lie on the Cytoplasmic side of the membrane; sequence YADNQIFKTLQMLWFKYLSPPKLMLKFNRQCGSTKK.

This sequence belongs to the G-protein coupled receptor 1 family.

It localises to the cell membrane. Putative pheromone receptor. This is Vomeronasal type-1 receptor 5 (VN1R5) from Homo sapiens (Human).